The primary structure comprises 787 residues: Serine/threonine-protein kinase SCH9 (787 aa).

Disordered regions lie at residues 1-82 (MVDF…QSGT), 132-172 (PQQQ…GSSQ), and 238-280 (SPVS…LFGQ). Residues 132 to 155 (PQQQQQQQAQQPPPEQQQSSAPYQ) are compositionally biased toward low complexity. 2 stretches are compositionally biased toward polar residues: residues 156 to 172 (NSANIQQPYGNQWGSSQ) and 239 to 263 (PVSSFGHNNNQGHNGPRNMYNSNHG). Positions 182-354 (DKTGNKLSPA…KNNKNESEWL (173 aa)) constitute a C2 domain. The Protein kinase domain occupies 392 to 653 (FHFLRLLGKG…ARELKAHPFF (262 aa)). ATP is bound by residues 398–406 (LGKGTFGQV) and Lys421. Asp518 functions as the Proton acceptor in the catalytic mechanism. In terms of domain architecture, AGC-kinase C-terminal spans 654 to 729 (ADIDWDLLRA…VDDSTMDDHF (76 aa)).

The protein belongs to the protein kinase superfamily. AGC Ser/Thr protein kinase family. cAMP subfamily.

The catalysed reaction is L-seryl-[protein] + ATP = O-phospho-L-seryl-[protein] + ADP + H(+). The enzyme catalyses L-threonyl-[protein] + ATP = O-phospho-L-threonyl-[protein] + ADP + H(+). In terms of biological role, protein kinase that is part of growth control pathway which is at least partially redundant with the cAMP pathway. Plays a role in filamentous growth and virulence. Prevents hypha formation specifically under hypoxia at high CO(2) levels. Required for chlamydospore formation, distinctive morphological feature of the fungal pathogen C.albicans that can be induced to form in oxygen-limited environments and has been reported in clinical specimens. The polypeptide is Serine/threonine-protein kinase SCH9 (SCH9) (Candida albicans (strain SC5314 / ATCC MYA-2876) (Yeast)).